Here is a 158-residue protein sequence, read N- to C-terminus: 2-C-methyl-D-erythritol 2,4-cyclodiphosphate synthase (158 aa).

Positions 8 and 10 each coordinate a divalent metal cation. Residues 8 to 10 (DAH) and 34 to 35 (HS) contribute to the 4-CDP-2-C-methyl-D-erythritol 2-phosphate site. Histidine 42 contributes to the a divalent metal cation binding site. Residues 56-58 (DIG), 132-135 (TTTE), and arginine 142 each bind 4-CDP-2-C-methyl-D-erythritol 2-phosphate.

It belongs to the IspF family. As to quaternary structure, homotrimer. A divalent metal cation serves as cofactor.

The enzyme catalyses 4-CDP-2-C-methyl-D-erythritol 2-phosphate = 2-C-methyl-D-erythritol 2,4-cyclic diphosphate + CMP. It functions in the pathway isoprenoid biosynthesis; isopentenyl diphosphate biosynthesis via DXP pathway; isopentenyl diphosphate from 1-deoxy-D-xylulose 5-phosphate: step 4/6. Functionally, involved in the biosynthesis of isopentenyl diphosphate (IPP) and dimethylallyl diphosphate (DMAPP), two major building blocks of isoprenoid compounds. Catalyzes the conversion of 4-diphosphocytidyl-2-C-methyl-D-erythritol 2-phosphate (CDP-ME2P) to 2-C-methyl-D-erythritol 2,4-cyclodiphosphate (ME-CPP) with a corresponding release of cytidine 5-monophosphate (CMP). This chain is 2-C-methyl-D-erythritol 2,4-cyclodiphosphate synthase, found in Nitrosococcus oceani (strain ATCC 19707 / BCRC 17464 / JCM 30415 / NCIMB 11848 / C-107).